Reading from the N-terminus, the 116-residue chain is Outer membrane protein assembly factor BamE (116 aa).

The signal sequence occupies residues 1–22 (MITMRCKMLTAAAVMLAMLTAG). C23 is lipidated: N-palmitoyl cysteine. The S-diacylglycerol cysteine moiety is linked to residue C23.

It belongs to the BamE family. In terms of assembly, part of the Bam complex, which is composed of the outer membrane protein BamA, and four lipoproteins BamB, BamC, BamD and BamE.

It is found in the cell outer membrane. Its function is as follows. Part of the outer membrane protein assembly complex, which is involved in assembly and insertion of beta-barrel proteins into the outer membrane. This chain is Outer membrane protein assembly factor BamE, found in Yersinia pestis.